Here is a 244-residue protein sequence, read N- to C-terminus: Ubiquinone/menaquinone biosynthesis C-methyltransferase UbiE (244 aa).

S-adenosyl-L-methionine-binding positions include Thr-70, Asp-91, and 117 to 118 (DA).

The protein belongs to the class I-like SAM-binding methyltransferase superfamily. MenG/UbiE family.

It catalyses the reaction a 2-demethylmenaquinol + S-adenosyl-L-methionine = a menaquinol + S-adenosyl-L-homocysteine + H(+). It carries out the reaction a 2-methoxy-6-(all-trans-polyprenyl)benzene-1,4-diol + S-adenosyl-L-methionine = a 5-methoxy-2-methyl-3-(all-trans-polyprenyl)benzene-1,4-diol + S-adenosyl-L-homocysteine + H(+). It functions in the pathway quinol/quinone metabolism; menaquinone biosynthesis; menaquinol from 1,4-dihydroxy-2-naphthoate: step 2/2. It participates in cofactor biosynthesis; ubiquinone biosynthesis. In terms of biological role, methyltransferase required for the conversion of demethylmenaquinol (DMKH2) to menaquinol (MKH2) and the conversion of 2-polyprenyl-6-methoxy-1,4-benzoquinol (DDMQH2) to 2-polyprenyl-3-methyl-6-methoxy-1,4-benzoquinol (DMQH2). This Nitrosospira multiformis (strain ATCC 25196 / NCIMB 11849 / C 71) protein is Ubiquinone/menaquinone biosynthesis C-methyltransferase UbiE.